Consider the following 121-residue polypeptide: Large ribosomal subunit protein uL14 (121 aa).

Belongs to the universal ribosomal protein uL14 family. In terms of assembly, part of the 50S ribosomal subunit. Forms a cluster with proteins L3 and L19. In the 70S ribosome, L14 and L19 interact and together make contacts with the 16S rRNA in bridges B5 and B8.

In terms of biological role, binds to 23S rRNA. Forms part of two intersubunit bridges in the 70S ribosome. In Synechococcus sp. (strain CC9902), this protein is Large ribosomal subunit protein uL14.